The following is a 371-amino-acid chain: GDP-mannose transporter (371 aa).

Residues 1–51 (MGVISFYLIGQLLYLIRKKYTTTYRQQQQHQYNMDSKHSTSSSSSGSLATR) lie on the Cytoplasmic side of the membrane. The helical transmembrane segment at 52-72 (ISNSGPISIAAYCLSSILMTV) threads the bilayer. The Lumenal portion of the chain corresponds to 73 to 80 (TNKYVLSG). The chain crosses the membrane as a helical span at residues 81–101 (FSFNLNFFLLAVQSIVCIVTI). The Cytoplasmic segment spans residues 102-121 (GSLKSLNIITYRQFNKDEAK). The chain crosses the membrane as a helical span at residues 122 to 138 (KWSPIAFLLVAMIYTSS). Over 139–145 (KALQYLS) the chain is Lumenal. A helical transmembrane segment spans residues 146-162 (IPVYTIFKNLTIILIAY). Over 163-171 (GEVIWFGGK) the chain is Cytoplasmic. Residues 172-192 (VTTMALSSFLLMVLSSVIAYY) traverse the membrane as a helical segment. The Lumenal portion of the chain corresponds to 193–206 (GDNAAVKSHDDAFA). The helical transmembrane segment at 207 to 227 (LYLGYFWMLTNCFASAAFVLI) threads the bilayer. The Cytoplasmic segment spans residues 228 to 241 (MRKRIKLTNFKDFD). The chain crosses the membrane as a helical span at residues 242–262 (TMYYNNLLSIPILLICSFIFE). The Lumenal segment spans residues 263–281 (DWSSANVSLNFPADNRVTT). Asn268 is a glycosylation site (N-linked (GlcNAc...) asparagine). Residues 282–302 (ITAMILSGASSVGISYCSAWC) form a helical membrane-spanning segment. At 303–309 (VRVTSST) the chain is on the cytoplasmic side. A helical membrane pass occupies residues 310-329 (TYSMVGALNKLPIALSGLIF). Residues 330 to 332 (FEA) lie on the Lumenal side of the membrane. A helical membrane pass occupies residues 333–355 (AVNFWSVSSIFVGFGAGLVYAVA). The Cytoplasmic portion of the chain corresponds to 356-371 (KQKQQKEQSQQLPTTK).

Belongs to the TPT transporter family. SLC35D subfamily. In terms of assembly, homooligomer.

It is found in the golgi apparatus membrane. The protein resides in the cytoplasmic vesicle membrane. The protein localises to the endoplasmic reticulum membrane. Its function is as follows. Involved in the import of GDP-mannose from the cytoplasm into the Golgi lumen. Involved in hyphal formation. The polypeptide is GDP-mannose transporter (VRG4) (Candida albicans (strain SC5314 / ATCC MYA-2876) (Yeast)).